We begin with the raw amino-acid sequence, 342 residues long: Holliday junction branch migration complex subunit RuvB (342 aa).

Positions 2 to 181 (TDNPLLSSAS…FGIPVRLQFY (180 aa)) are large ATPase domain (RuvB-L). Residues leucine 20, arginine 21, glycine 62, lysine 65, threonine 66, threonine 67, arginine 171, tyrosine 181, and arginine 218 each contribute to the ATP site. Threonine 66 is a binding site for Mg(2+). Positions 182 to 252 (SVEELERVVA…IADNALTRLE (71 aa)) are small ATPAse domain (RuvB-S). A head domain (RuvB-H) region spans residues 255–342 (KIGLDLQDRR…QMPGLFGPDE (88 aa)). DNA is bound by residues arginine 291, arginine 310, and arginine 315.

This sequence belongs to the RuvB family. In terms of assembly, homohexamer. Forms an RuvA(8)-RuvB(12)-Holliday junction (HJ) complex. HJ DNA is sandwiched between 2 RuvA tetramers; dsDNA enters through RuvA and exits via RuvB. An RuvB hexamer assembles on each DNA strand where it exits the tetramer. Each RuvB hexamer is contacted by two RuvA subunits (via domain III) on 2 adjacent RuvB subunits; this complex drives branch migration. In the full resolvosome a probable DNA-RuvA(4)-RuvB(12)-RuvC(2) complex forms which resolves the HJ.

Its subcellular location is the cytoplasm. The catalysed reaction is ATP + H2O = ADP + phosphate + H(+). Functionally, the RuvA-RuvB-RuvC complex processes Holliday junction (HJ) DNA during genetic recombination and DNA repair, while the RuvA-RuvB complex plays an important role in the rescue of blocked DNA replication forks via replication fork reversal (RFR). RuvA specifically binds to HJ cruciform DNA, conferring on it an open structure. The RuvB hexamer acts as an ATP-dependent pump, pulling dsDNA into and through the RuvAB complex. RuvB forms 2 homohexamers on either side of HJ DNA bound by 1 or 2 RuvA tetramers; 4 subunits per hexamer contact DNA at a time. Coordinated motions by a converter formed by DNA-disengaged RuvB subunits stimulates ATP hydrolysis and nucleotide exchange. Immobilization of the converter enables RuvB to convert the ATP-contained energy into a lever motion, pulling 2 nucleotides of DNA out of the RuvA tetramer per ATP hydrolyzed, thus driving DNA branch migration. The RuvB motors rotate together with the DNA substrate, which together with the progressing nucleotide cycle form the mechanistic basis for DNA recombination by continuous HJ branch migration. Branch migration allows RuvC to scan DNA until it finds its consensus sequence, where it cleaves and resolves cruciform DNA. The chain is Holliday junction branch migration complex subunit RuvB from Novosphingobium aromaticivorans (strain ATCC 700278 / DSM 12444 / CCUG 56034 / CIP 105152 / NBRC 16084 / F199).